We begin with the raw amino-acid sequence, 1466 residues long: ABC transporter C family member 6 (1466 aa).

10 consecutive transmembrane segments (helical) span residues 16-36, 63-83, 91-111, 128-148, 158-178, 286-306, 322-339, 400-420, 425-445, and 512-532; these read SVLS…SWLF, LVLI…LLSC, WPFL…VYLF, VWWV…FVLY, FVIS…SCLW, IVLS…APYL, NQGY…LVEC, WFMH…WILY, LGSI…YPFA, and SVLW…CLLL. Residues 286–567 form the ABC transmembrane type-1 1 domain; sequence IVLSALLAFV…LPETISMIVQ (282 aa). An ABC transporter 1 domain is found at 601-824; that stretch reads VEISNGTFSW…GTDFMELVGA (224 aa). An ATP-binding site is contributed by 636-643; it reads GTVGSGKS. Residues 840 to 876 form a disordered region; that stretch reads ASEKSTTDKENEVLHHKEKQENGSDNKPSGQLVQEEE. The span at 844–863 shows a compositional bias: basic and acidic residues; it reads STTDKENEVLHHKEKQENGS. A run of 3 helical transmembrane segments spans residues 890 to 910, 937 to 957, and 1026 to 1046; these read YMAL…QVLF, GFTL…CILI, and ILGI…VFIP. The region spanning 900 to 1182 is the ABC transmembrane type-1 2 domain; it reads IPLILVVQVL…LIWTLCDLEN (283 aa). The ABC transporter 2 domain maps to 1219 to 1453; sequence ITICNLQVRY…RSSLFSKLVA (235 aa). Residue 1253-1260 coordinates ATP; the sequence is GRTGCGKS.

Belongs to the ABC transporter superfamily. ABCC family. Conjugate transporter (TC 3.A.1.208) subfamily. In terms of tissue distribution, ubiquitous.

Its subcellular location is the membrane. The enzyme catalyses ATP + H2O + xenobioticSide 1 = ADP + phosphate + xenobioticSide 2.. Its function is as follows. Pump for glutathione S-conjugates. This chain is ABC transporter C family member 6 (ABCC6), found in Arabidopsis thaliana (Mouse-ear cress).